The primary structure comprises 416 residues: Creatine kinase U-type, mitochondrial (416 aa).

Residues 1 to 39 constitute a mitochondrion transit peptide; sequence MAGPFSRLLSARPGLRLLALAGAGSLAAGFLLRPEPIRA. The cardiolipin-binding stretch occupies residues 40 to 63; that stretch reads ASERRRQYPPSAEYPDLRKHNNCM. The Phosphagen kinase N-terminal domain occupies 44–131; that stretch reads RRQYPPSAEY…FDPVIQERHN (88 aa). Ser151 bears the Phosphoserine mark. Residues 158–400 enclose the Phosphagen kinase C-terminal domain; sequence YVLSSRVRTG…NYLIDCERRL (243 aa). 161-165 contacts ATP; that stretch reads SSRVR. Ser196 carries the post-translational modification Phosphoserine. Thr213 carries the post-translational modification Phosphothreonine. His224 contacts ATP. Phosphoserine is present on Ser232. Residues Arg269, Arg325, and 353–358 each bind ATP; that span reads RGTGGV. Thr355 is subject to Phosphothreonine. Ser365 carries the phosphoserine modification. Asp368 lines the ATP pocket.

Belongs to the ATP:guanido phosphotransferase family. As to quaternary structure, exists as an octamer composed of four MTCK homodimers.

It localises to the mitochondrion inner membrane. It carries out the reaction creatine + ATP = N-phosphocreatine + ADP + H(+). In terms of biological role, reversibly catalyzes the transfer of phosphate between ATP and various phosphogens (e.g. creatine phosphate). Creatine kinase isoenzymes play a central role in energy transduction in tissues with large, fluctuating energy demands, such as skeletal muscle, heart, brain and spermatozoa. This Sus scrofa (Pig) protein is Creatine kinase U-type, mitochondrial (CKMT1).